The chain runs to 488 residues: Catalase (488 aa).

The segment at 1-24 (MTERKNLTTNQGTPVGDNQNSMTA) is disordered. The span at 7 to 23 (LTTNQGTPVGDNQNSMT) shows a compositional bias: polar residues. Catalysis depends on residues histidine 55 and asparagine 128. Tyrosine 338 serves as a coordination point for heme.

Belongs to the catalase family. Heme serves as cofactor.

Its subcellular location is the cytoplasm. The catalysed reaction is 2 H2O2 = O2 + 2 H2O. Decomposes hydrogen peroxide into water and oxygen; serves to protect cells from the toxic effects of hydrogen peroxide. This Listeria innocua serovar 6a (strain ATCC BAA-680 / CLIP 11262) protein is Catalase (kat).